We begin with the raw amino-acid sequence, 100 residues long: Small ribosomal subunit protein uS14c (100 aa).

The protein belongs to the universal ribosomal protein uS14 family. Part of the 30S ribosomal subunit.

It localises to the plastid. The protein resides in the chloroplast. Functionally, binds 16S rRNA, required for the assembly of 30S particles. The chain is Small ribosomal subunit protein uS14c from Emiliania huxleyi (Coccolithophore).